Reading from the N-terminus, the 170-residue chain is S-ribosylhomocysteine lyase (170 aa).

Histidine 54, histidine 58, and cysteine 128 together coordinate Fe cation.

It belongs to the LuxS family. As to quaternary structure, homodimer. The cofactor is Fe cation.

The catalysed reaction is S-(5-deoxy-D-ribos-5-yl)-L-homocysteine = (S)-4,5-dihydroxypentane-2,3-dione + L-homocysteine. Its function is as follows. Involved in the synthesis of autoinducer 2 (AI-2) which is secreted by bacteria and is used to communicate both the cell density and the metabolic potential of the environment. The regulation of gene expression in response to changes in cell density is called quorum sensing. Catalyzes the transformation of S-ribosylhomocysteine (RHC) to homocysteine (HC) and 4,5-dihydroxy-2,3-pentadione (DPD). The polypeptide is S-ribosylhomocysteine lyase (Marinomonas sp. (strain MWYL1)).